The sequence spans 336 residues: Probable carboxylesterase 6 (336 aa).

Residues 1–20 are disordered; the sequence is MGGTKLTHVTTTNPNNSNIH. Positions 7-19 are enriched in polar residues; it reads THVTTTNPNNSNI. An Involved in the stabilization of the negatively charged intermediate by the formation of the oxyanion hole motif is present at residues 96-98; that stretch reads HGG. Residues S176, D276, and H303 contribute to the active site.

This sequence belongs to the 'GDXG' lipolytic enzyme family. Expressed in roots, leaves, flowers and siliques.

The catalysed reaction is a carboxylic ester + H2O = an alcohol + a carboxylate + H(+). Its function is as follows. Carboxylesterase acting on esters with varying acyl chain length. This Arabidopsis thaliana (Mouse-ear cress) protein is Probable carboxylesterase 6 (CXE6).